The primary structure comprises 412 residues: Polyferredoxin protein MvhB (412 aa).

4Fe-4S ferredoxin-type domains lie at 2 to 29 (IVINKEDCIRCGACQGVCPTGAISVKPE), 30 to 57 (DVIYCDMCGGEPKCVEACPNDALRHEDI), 66 to 95 (KKITYSPEKCDKCGECVKVCPPGILKLVND), 96 to 127 (GKASRVPLEGFCVLCQQCVNVCPIEVIGIEGV), 138 to 166 (DKPIYIVDCVGCGLCVPECPVNAITLPKY), 168 to 197 (ESIEIDEEKCIKCGICAQTCPWNSVYISGK), 207 to 236 (ENFTLDKEECIGCNTCVEICPGGFIEPKSD), 237 to 265 (LTVSLPEICPACGLCEKLCPTDAIELEVK), 275 to 304 (EGIVYNDENCKFCGRCALNCPNEAIRVVSP), 311 to 344 (GLKKVDEKESYTICTTCGACTTVCPTGALKLVEV), 356 to 385 (NRIQYNPSLCDKCGNCVDVCPYGILKLTDD), and 386 to 412 (EKLPVKGFCILCEKCIDACRFNALLIK). Cys-9, Cys-12, Cys-15, and Cys-19 together coordinate [4Fe-4S] cluster. The [4Fe-4S] cluster site is built by Cys-75, Cys-78, Cys-81, Cys-85, Cys-107, Cys-110, Cys-113, Cys-117, Cys-146, Cys-149, Cys-152, Cys-156, Cys-177, Cys-180, Cys-183, Cys-187, Cys-216, Cys-219, Cys-222, Cys-226, Cys-245, Cys-248, Cys-251, Cys-255, Cys-284, Cys-287, Cys-290, Cys-294, Cys-324, Cys-327, Cys-330, Cys-334, Cys-365, Cys-368, Cys-371, and Cys-375.

[4Fe-4S] cluster is required as a cofactor.

This is Polyferredoxin protein MvhB (mvhB) from Methanothermus fervidus.